The sequence spans 219 residues: Probable cutinase 4 (219 aa).

An N-terminal signal peptide occupies residues 1–17 (MILPSLLVASLSALAAA). 2 disulfide bridges follow: Cys41–Cys120 and Cys67–Cys81. An N-linked (GlcNAc...) asparagine glycan is attached at Asn99. Ser131 (nucleophile) is an active-site residue. Residues Cys182 and Cys189 are joined by a disulfide bond. Residue Asp186 is part of the active site. The active-site Proton donor/acceptor is the His199.

This sequence belongs to the cutinase family.

Its subcellular location is the secreted. The enzyme catalyses cutin + H2O = cutin monomers.. Its function is as follows. Catalyzes the hydrolysis of complex carboxylic polyesters found in the cell wall of plants. Degrades cutin, a macromolecule that forms the structure of the plant cuticle. This chain is Probable cutinase 4, found in Aspergillus terreus (strain NIH 2624 / FGSC A1156).